Consider the following 299-residue polypeptide: Coenzyme PQQ synthesis protein B (299 aa).

This sequence belongs to the PqqB family.

The protein operates within cofactor biosynthesis; pyrroloquinoline quinone biosynthesis. May be involved in the transport of PQQ or its precursor to the periplasm. In Xanthomonas oryzae pv. oryzae (strain MAFF 311018), this protein is Coenzyme PQQ synthesis protein B.